The following is a 380-amino-acid chain: MNITGKGAYDTGTYANLFQRSGYREDEIKARLEQTWNDLFYGDEHTRIYYPVGDDKGYMLDTGNDDVRSEGMSYGMMMAVQMDKKHEFDRLWNYAYTYMQHTEGRYKDYFAWHCKPDGTRLSPGPAPDGEEFFAMALFFASNRWGDGPAPYDYQAQARKILHACLHQGEQGEGDPMWEPSNRLIKFIPELPFSDPSYHLPHFYELFAQYANEQDRTFWKEAAEASRAYLRTACHPVTGLSPEYANYDGTPAPVQLHGDFRHFYSDAYRVAANVALDWEWFRKDPWQVQQSNRIQAFFSDIDVSDYRRYTIEGEPFNEPALHPVGLLATNAMASLAADGPDADSFVKRFWNTPLRQGKRRYYDNCLYFFTMLALSGNYRVY.

The active-site Proton donor is the Glu70. Asp265 serves as the catalytic Proton acceptor.

The protein belongs to the glycosyl hydrolase 8 (cellulase D) family.

The enzyme catalyses Hydrolysis of (1-&gt;4)-beta-D-xylose residues from the reducing end of oligosaccharides.. It functions in the pathway glycan degradation; xylan degradation. Its function is as follows. Involved in depolymerization of xylan, a major component of the lignocellulosic substrates. Acts as an exo-oligoxylanase that efficiently hydrolyzes xylooligosaccharides, releasing xylose from their reducing ends. Hydrolyzes xylooligomers of 3 to 6 xylose units to xylose and xylobiose. Besides linear xylooligosaccharides, also hydrolyzes branched xylooligomers, such as xylooligomers decorated with 4-O-methyl-D-glucuronic acid moieties. Its proposed role is the degradation of xylooligomers produced by the activity of extracellular xylanases once they have been transported inside cells. Shows minor activity on polymeric xylan (glucuronoxylan from beechwood). Is not active on cellooligosaccharides or cellulosic substrates, or on other polysaccharides such as pectin, polygalacturonic acid, laminarin, or lichenan. The polypeptide is Reducing-end xylose-releasing exo-oligoxylanase Rex8A (Paenibacillus barcinonensis).